The sequence spans 81 residues: Neuronatin (81 aa).

It belongs to the neuronatin family.

May participate in the maintenance of segment identity in the hindbrain and pituitary development, and maturation or maintenance of the overall structure of the nervous system. May function as a regulatory subunit of ion channels. This chain is Neuronatin (NNAT), found in Mesocricetus auratus (Golden hamster).